A 779-amino-acid polypeptide reads, in one-letter code: Endoribonuclease YSH1 (779 aa).

6 residues coordinate Zn(2+): histidine 68, histidine 70, aspartate 72, histidine 73, histidine 163, and aspartate 184. The active-site Proton donor is histidine 408. Histidine 430 provides a ligand contact to Zn(2+). Serine 517 is subject to Phosphoserine; by ATM or ATR.

It belongs to the metallo-beta-lactamase superfamily. RNA-metabolizing metallo-beta-lactamase-like family. CPSF2/YSH1 subfamily. Component of the cleavage and polyadenylation factor (CPF) complex, which is composed of at least PTI1, SYC1, SSU72, GLC7, MPE1, REF2, PFS2, PTA1, YSH1/BRR5, SWD2, CFT2/YDH1, YTH1, CFT1/YHH1, FIP1 and PAP1. Interacts with FIP1, PFS2, RNA14 and YTH1. It depends on Zn(2+) as a cofactor.

It is found in the nucleus. Its function is as follows. Component of the cleavage and polyadenylation factor (CPF) complex, which plays a key role in polyadenylation-dependent pre-mRNA 3'-end formation and cooperates with cleavage factors including the CFIA complex and NAB4/CFIB. Has endonuclease activity. This Saccharomyces cerevisiae (strain ATCC 204508 / S288c) (Baker's yeast) protein is Endoribonuclease YSH1 (YSH1).